The sequence spans 228 residues: RNA pyrophosphohydrolase (228 aa).

A unknown region spans residues 1-70 (MEKRSGIGRL…KQWVKMMNDI (70 aa)). The rppH domain stretch occupies residues 71–228 (VIDKRGFRLG…VLTEFAEFIR (158 aa)). One can recognise a Nudix hydrolase domain in the interval 76–221 (GFRLGVGMVI…KRDVYQKVLT (146 aa)). Residues 109 to 130 (GGLLPNETLREALNRELDEEVG) carry the Nudix box motif.

In the C-terminal section; belongs to the Nudix hydrolase family. RppH subfamily. It depends on a divalent metal cation as a cofactor.

In terms of biological role, accelerates the degradation of transcripts by removing pyrophosphate from the 5'-end of triphosphorylated RNA, leading to a more labile monophosphorylated state that can stimulate subsequent ribonuclease cleavage. The polypeptide is RNA pyrophosphohydrolase (Coxiella burnetii (strain RSA 493 / Nine Mile phase I)).